Here is a 420-residue protein sequence, read N- to C-terminus: Probable pectate lyase C (420 aa).

The first 20 residues, 1-20, serve as a signal peptide directing secretion; it reads MKLSEPLLVSLAAFSQAVTA. 3 N-linked (GlcNAc...) asparagine glycosylation sites follow: N49, N165, and N202. R205 is a catalytic residue. The EF-hand domain occupies 262-297; it reads NANFHGYVQNNYYDPDKDGQLDGFELGVSSSNYGGM. Ca(2+) is bound by residues D275, D277, D279, Q281, and E286. The segment at 358-396 is disordered; it reads TMGGPGTLNGGTPAKDTDGDGIPDEAEKQLGTDPNTNDS. N-linked (GlcNAc...) asparagine glycosylation is present at N394.

It belongs to the polysaccharide lyase 1 family. Requires Ca(2+) as cofactor.

Its subcellular location is the secreted. The enzyme catalyses Eliminative cleavage of (1-&gt;4)-alpha-D-galacturonan to give oligosaccharides with 4-deoxy-alpha-D-galact-4-enuronosyl groups at their non-reducing ends.. Its function is as follows. Pectinolytic enzyme consist of four classes of enzymes: pectin lyase, polygalacturonase, pectin methylesterase and rhamnogalacturonase. Among pectinolytic enzymes, pectin lyase is the most important in depolymerization of pectin, since it cleaves internal glycosidic bonds of highly methylated pectins. Favors pectate, the anion, over pectin, the methyl ester. This chain is Probable pectate lyase C (plyC), found in Aspergillus fumigatus (strain ATCC MYA-4609 / CBS 101355 / FGSC A1100 / Af293) (Neosartorya fumigata).